A 430-amino-acid chain; its full sequence is Enolase (430 aa).

A (2R)-2-phosphoglycerate-binding site is contributed by Gln-167. Glu-209 (proton donor) is an active-site residue. Mg(2+) contacts are provided by Asp-246, Glu-287, and Asp-314. Residues Lys-339, Arg-368, Ser-369, and Lys-390 each coordinate (2R)-2-phosphoglycerate. Lys-339 acts as the Proton acceptor in catalysis.

Belongs to the enolase family. It depends on Mg(2+) as a cofactor.

It localises to the cytoplasm. Its subcellular location is the secreted. It is found in the cell surface. It catalyses the reaction (2R)-2-phosphoglycerate = phosphoenolpyruvate + H2O. It functions in the pathway carbohydrate degradation; glycolysis; pyruvate from D-glyceraldehyde 3-phosphate: step 4/5. Functionally, catalyzes the reversible conversion of 2-phosphoglycerate (2-PG) into phosphoenolpyruvate (PEP). It is essential for the degradation of carbohydrates via glycolysis. This chain is Enolase, found in Prochlorococcus marinus (strain MIT 9312).